A 201-amino-acid polypeptide reads, in one-letter code: Ribosome maturation factor RimP (201 aa).

It belongs to the RimP family.

The protein localises to the cytoplasm. Required for maturation of 30S ribosomal subunits. This is Ribosome maturation factor RimP from Acidobacterium capsulatum (strain ATCC 51196 / DSM 11244 / BCRC 80197 / JCM 7670 / NBRC 15755 / NCIMB 13165 / 161).